Consider the following 145-residue polypeptide: Protein SprT-like (145 aa).

Residues 4–140 (TNYVQEVSLA…VCGNCHGKLM (137 aa)) form the SprT-like domain. Residue His-64 coordinates Zn(2+). Residue Glu-65 is part of the active site. Residue His-68 coordinates Zn(2+).

The protein belongs to the SprT family. Zn(2+) serves as cofactor.

The protein resides in the cytoplasm. This is Protein SprT-like from Streptococcus pyogenes serotype M3 (strain SSI-1).